The sequence spans 732 residues: Ets DNA-binding protein pokkuri (732 aa).

Positions 33 to 117 constitute a PNT domain; it reads SSQLAELKTQ…NVLQMLIIES (85 aa). The disordered stretch occupies residues 133 to 295; that stretch reads SRYPLSPHSH…PPGTPILKDI (163 aa). Over residues 141–157 the composition is skewed to pro residues; it reads SHPPTPTWPPLNAPPEN. Polar residues predominate over residues 176–193; it reads NSVTLSPPPSVDSQASSP. The span at 205–240 shows a compositional bias: low complexity; it reads GAAPGSAGGSAPAAGGATNTSNPTSSSASSTGSNGS. A DNA-binding region (ETS) is located at residues 396–479; it reads RLLWDFLQQL…QGERHCYQFL (84 aa). Disordered regions lie at residues 496–548, 590–647, and 674–732; these read QSTP…NGPM, GPPP…TATS, and VAAS…HMQQ. The span at 506–539 shows a compositional bias: low complexity; sequence SPSMPQGSSQAPGSPAGQNWNPQQQSQQQQQSPQ. Ser543 is modified (phosphoserine). The span at 637-647 shows a compositional bias: polar residues; that stretch reads LSVSSKSTATS. Ser677, Ser682, and Ser696 each carry phosphoserine. The segment covering 690–709 has biased composition (polar residues); that stretch reads AGASNASSSPRPMDQASEQA.

Belongs to the ETS family. Phosphorylated in response to MAPK signaling. May be phosphorylated by rl. In terms of tissue distribution, expressed in R7 and cone cells of the eye.

It is found in the nucleus. In terms of biological role, ets-related protein that functions as a negative regulator of photoreceptor development acting antagonistically to pnt and the proneural signal mediated by RAS. It acts upstream of SINA to inhibit R7 development. The sequence is that of Ets DNA-binding protein pokkuri (aop) from Drosophila melanogaster (Fruit fly).